The chain runs to 335 residues: Homeobox protein Hox-A1 (335 aa).

Residues 61-80 (IGSPHHHHHHHHRHPQPATY) form a disordered region. The segment covering 64-75 (PHHHHHHHHRHP) has biased composition (basic residues). The interaction with OGT stretch occupies residues 75-203 (PQPATYQTSG…PASETSSPAQ (129 aa)). The Antp-type hexapeptide motif lies at 204–209 (TFDWMK). Residues 229–288 (PNAVRTNFTTKQLTELEKEFHFNKYLTRARRVEIAASLQLNETQVKIWFQNRRMKQKKRE) constitute a DNA-binding region (homeobox). Residues 281–335 (RMKQKKREKEGLLPISPATPPGNDEKAEESSEKSSSSPCVPSPGSSTSDTLTTSH) form a disordered region. The span at 303–312 (NDEKAEESSE) shows a compositional bias: basic and acidic residues. The segment covering 313–328 (KSSSSPCVPSPGSSTS) has biased composition (low complexity).

Belongs to the Antp homeobox family. Labial subfamily. As to quaternary structure, interacts with OGT (via TPR repeats domain); the interaction takes place mainly in the nucleus. Forms a DNA-binding heterodimer with transcription factor PBX1.

The protein localises to the nucleus. In terms of biological role, sequence-specific transcription factor. Regulates multiple developmental processes including brainstem, inner and outer ear, abducens nerve and cardiovascular development and morphogenesis as well as cognition and behavior. Also part of a developmental regulatory system that provides cells with specific positional identities on the anterior-posterior axis. Acts on the anterior body structures. Seems to act in the maintenance and/or generation of hindbrain segments. Activates transcription in the presence of PBX1A and PKNOX1. This is Homeobox protein Hox-A1 (HOXA1) from Homo sapiens (Human).